A 101-amino-acid polypeptide reads, in one-letter code: Rho GTPase-activating protein 39 (101 aa).

The Rho-GAP domain maps to 1–96 (YEQCIAHYES…VLIQHLDTSF (96 aa)).

In terms of tissue distribution, preoptic area and testis.

This is Rho GTPase-activating protein 39 (Arhgap39) from Rattus norvegicus (Rat).